Here is a 575-residue protein sequence, read N- to C-terminus: Cytokinin dehydrogenase 1 (575 aa).

Positions methionine 1–glycine 31 are cleaved as a signal peptide. N-linked (GlcNAc...) asparagine glycans are attached at residues asparagine 14, asparagine 38, and asparagine 115. One can recognise an FAD-binding PCMH-type domain in the interval tyrosine 84 to alanine 262. Alanine 120, glycine 122, and glycine 124 together coordinate FAD. Position 125 is a pros-8alpha-FAD histidine (histidine 125). The FAD site is built by serine 126, glutamine 130, aspartate 186, threonine 191, serine 197, isoleucine 201, and isoleucine 252. N-linked (GlcNAc...) asparagine glycans are attached at residues asparagine 303, asparagine 318, asparagine 437, and asparagine 467. FAD contacts are provided by tyrosine 498 and glutamine 536.

Belongs to the oxygen-dependent FAD-linked oxidoreductase family. FAD is required as a cofactor. As to expression, expressed in shoot apexes, lateral shoot meristems, growing tissues of young flowers, and weakly at the root-hypocotyl junction.

The protein localises to the vacuole. It catalyses the reaction N(6)-dimethylallyladenine + A + H2O = 3-methyl-2-butenal + adenine + AH2. Functionally, catalyzes the oxidation of cytokinins, a family of N(6)-substituted adenine derivatives that are plant hormones, where the substituent is an isopentenyl group. Catalyzes in vitro the oxidation of various types of cytokinin nucleotides that are known as direct products of cytokinin biosynthesis. Promotes adventitious root initiation downstream of MYC2-dependent jasmonate signaling. Cytokinin degraded by CKX1 is required for cell division in the female gametophyte by modulating the expression of cell cycle genes. In Arabidopsis thaliana (Mouse-ear cress), this protein is Cytokinin dehydrogenase 1 (CKX1).